A 762-amino-acid polypeptide reads, in one-letter code: Putative BTB/POZ domain-containing protein L272 (762 aa).

The region spanning 16-86 (TDITIILKDE…FYGQKIKSHN (71 aa)) is the BTB domain. Residues 390–410 (DLDNSNDLNDSNDLDDSDDSN) are compositionally biased toward acidic residues. Disordered stretches follow at residues 390–411 (DLDN…DSND) and 532–556 (ISDN…NSDN). The segment covering 532 to 543 (ISDNSDNLNNSD) has biased composition (low complexity). Residues 737-762 (FSENYCDELINRLNNALKKIEQKYPN) adopt a coiled-coil conformation.

It belongs to the mimivirus BTB/WD family.

In Acanthamoeba polyphaga (Amoeba), this protein is Putative BTB/POZ domain-containing protein L272.